A 309-amino-acid polypeptide reads, in one-letter code: Porphobilinogen deaminase (309 aa).

Cys240 bears the S-(dipyrrolylmethanemethyl)cysteine mark.

Belongs to the HMBS family. As to quaternary structure, monomer. Requires dipyrromethane as cofactor.

It catalyses the reaction 4 porphobilinogen + H2O = hydroxymethylbilane + 4 NH4(+). The protein operates within porphyrin-containing compound metabolism; protoporphyrin-IX biosynthesis; coproporphyrinogen-III from 5-aminolevulinate: step 2/4. Its function is as follows. Tetrapolymerization of the monopyrrole PBG into the hydroxymethylbilane pre-uroporphyrinogen in several discrete steps. This chain is Porphobilinogen deaminase, found in Chromobacterium violaceum (strain ATCC 12472 / DSM 30191 / JCM 1249 / CCUG 213 / NBRC 12614 / NCIMB 9131 / NCTC 9757 / MK).